We begin with the raw amino-acid sequence, 267 residues long: Flap endonuclease Xni (267 aa).

Aspartate 115 is a Mg(2+) binding site. One can recognise a 5'-3' exonuclease domain in the interval 171 to 261; that stretch reads VAPAQLVDFW…LGFNLREIRY (91 aa). Residues leucine 182, valine 193, and isoleucine 196 each coordinate K(+). Residues 195-200 are interaction with DNA; it reads GIGPKT.

The protein belongs to the Xni family. Mg(2+) serves as cofactor. Requires K(+) as cofactor.

In terms of biological role, has flap endonuclease activity. During DNA replication, flap endonucleases cleave the 5'-overhanging flap structure that is generated by displacement synthesis when DNA polymerase encounters the 5'-end of a downstream Okazaki fragment. The polypeptide is Flap endonuclease Xni (Aeromonas hydrophila subsp. hydrophila (strain ATCC 7966 / DSM 30187 / BCRC 13018 / CCUG 14551 / JCM 1027 / KCTC 2358 / NCIMB 9240 / NCTC 8049)).